The chain runs to 163 residues: Peptide methionine sulfoxide reductase MsrA 1 (163 aa).

Cys-21 is a catalytic residue.

It belongs to the MsrA Met sulfoxide reductase family.

The enzyme catalyses L-methionyl-[protein] + [thioredoxin]-disulfide + H2O = L-methionyl-(S)-S-oxide-[protein] + [thioredoxin]-dithiol. It catalyses the reaction [thioredoxin]-disulfide + L-methionine + H2O = L-methionine (S)-S-oxide + [thioredoxin]-dithiol. Functionally, has an important function as a repair enzyme for proteins that have been inactivated by oxidation. Catalyzes the reversible oxidation-reduction of methionine sulfoxide in proteins to methionine. This is Peptide methionine sulfoxide reductase MsrA 1 (msrA1) from Nostoc sp. (strain PCC 7120 / SAG 25.82 / UTEX 2576).